The sequence spans 124 residues: Large ribosomal subunit protein eL22y (124 aa).

This sequence belongs to the eukaryotic ribosomal protein eL22 family.

The sequence is that of Large ribosomal subunit protein eL22y (RPL22C) from Arabidopsis thaliana (Mouse-ear cress).